Reading from the N-terminus, the 345-residue chain is uncharacterized protein (345 aa).

Helical transmembrane passes span 23-43 (VVGF…YSYV) and 56-76 (FLIA…FVAL). The disordered stretch occupies residues 326 to 345 (VTEPTTNSKRKPVKAKKAKK). Over residues 333–345 (SKRKPVKAKKAKK) the composition is skewed to basic residues.

Its subcellular location is the cell membrane. This is an uncharacterized protein from Mycoplasma pneumoniae (strain ATCC 29342 / M129 / Subtype 1) (Mycoplasmoides pneumoniae).